Reading from the N-terminus, the 330-residue chain is Taste receptor type 2 member 136 (330 aa).

Over 1-32 (MKSQPVTQELHFIFPLFKTISSDIMSFLVSIA) the chain is Extracellular. Residues 33 to 53 (GIAMLAQIVLGTFANVFIVLV) traverse the membrane as a helical segment. The Cytoplasmic portion of the chain corresponds to 54–73 (TCTDCIRRRKLFLADGILTS). Residues 74–94 (LAFCRIGMLWVILISWCSIVF) traverse the membrane as a helical segment. Over 95–122 (HQALSLQVRFSICVGWAVTNHFNMWLAT) the chain is Extracellular. Residues 123–143 (ILSILYLLKIGNFSNLIFLGL) traverse the membrane as a helical segment. The Cytoplasmic portion of the chain corresponds to 144–149 (KRKIKS). A helical membrane pass occupies residues 150–170 (VFIVVLLASLVLLFPNLITVT). Residues 171–201 (VCETVQANGYRGNLTGKTKRTYFMNLTAMIS) are Extracellular-facing. 2 N-linked (GlcNAc...) asparagine glycosylation sites follow: Asn183 and Asn195. A helical membrane pass occupies residues 202–222 (FTLDNIISFTISMVCFLLLIY). Topologically, residues 223–248 (SLCKHLRTMRLYGKGPHNPSASAHIK) are cytoplasmic. The helical transmembrane segment at 249-269 (ALQAVISFLLLFSMFILSLII) threads the bilayer. At 270–283 (SGYNYMKPLNEPVH) the chain is on the extracellular side. Residues 284–304 (LICQLIGTLYPSSHSYVLLWG) form a helical membrane-spanning segment. Topologically, residues 305 to 330 (NRRIKLAFVLAMVQVRARLWLKEEKP) are cytoplasmic.

It belongs to the G-protein coupled receptor T2R family.

Its subcellular location is the membrane. Putative taste receptor which may play a role in the perception of bitterness. This is Taste receptor type 2 member 136 from Rattus norvegicus (Rat).